Consider the following 302-residue polypeptide: Nucleoside kinase (302 aa).

Substrate is bound by residues D17, Q33, G43, and N47. ATP is bound at residue Q109. Substrate is bound by residues 111-113 (TFF) and Q163. Residues N186 and 214–219 (TKGSKG) contribute to the ATP site. D247 contacts substrate. D247 (proton acceptor) is an active-site residue.

As to quaternary structure, homodimer. Mg(2+) serves as cofactor. Requires Mn(2+) as cofactor.

The catalysed reaction is cytidine + ATP = CMP + ADP + H(+). It carries out the reaction guanosine + ATP = GMP + ADP + H(+). It catalyses the reaction inosine + ATP = IMP + ADP + H(+). Its function is as follows. Catalyzes the phosphorylation of a wide range of nucleosides to yield nucleoside monophosphates. Shows the highest activity for inosine, guanosine and cytidine, but very poor kinase activity with adenosine, thymidine, uridine and xanthosine. ATP is the best phosphate donor, but can also use ITP and GTP. Shows extremely low activity with fructose-6-phosphate. This Methanocaldococcus jannaschii (strain ATCC 43067 / DSM 2661 / JAL-1 / JCM 10045 / NBRC 100440) (Methanococcus jannaschii) protein is Nucleoside kinase.